The following is a 362-amino-acid chain: Ferredoxin--NADP reductase 1 (362 aa).

The FAD site is built by aspartate 47, glutamine 55, tyrosine 60, alanine 100, phenylalanine 141, aspartate 309, and serine 350.

It belongs to the ferredoxin--NADP reductase type 2 family. As to quaternary structure, homodimer. It depends on FAD as a cofactor.

It catalyses the reaction 2 reduced [2Fe-2S]-[ferredoxin] + NADP(+) + H(+) = 2 oxidized [2Fe-2S]-[ferredoxin] + NADPH. This Cupriavidus pinatubonensis (strain JMP 134 / LMG 1197) (Cupriavidus necator (strain JMP 134)) protein is Ferredoxin--NADP reductase 1.